The following is a 289-amino-acid chain: mRNA-capping enzyme small subunit (289 aa).

In terms of assembly, heterodimer of a large and a small subunit.

It is found in the virion. It catalyses the reaction a 5'-end (5'-triphosphoguanosine)-ribonucleoside in mRNA + S-adenosyl-L-methionine = a 5'-end (N(7)-methyl 5'-triphosphoguanosine)-ribonucleoside in mRNA + S-adenosyl-L-homocysteine. In terms of biological role, catalyzes the last reaction in the mRNA cap formation pathway. The chain is mRNA-capping enzyme small subunit from Fowlpox virus (strain NVSL) (FPV).